Here is a 266-residue protein sequence, read N- to C-terminus: BTB/POZ domain-containing protein KCTD2 (266 aa).

N-acetylalanine is present on A2. Residues 38-79 are disordered; it reads GRHPADTAASPPPPRTAGARARTSGADGRRRGRPLGPAQRGR. Residues 53-63 are compositionally biased toward low complexity; that stretch reads TAGARARTSGA. In terms of domain architecture, BTB spans 76 to 174; the sequence is QRGRYLLRDT…LVKERIRDNE (99 aa).

In Mus musculus (Mouse), this protein is BTB/POZ domain-containing protein KCTD2 (Kctd2).